The chain runs to 163 residues: MADSSFDVVSKVDRQEVDNALNQAAKELSTRFDFRGTDTTIAWKGEEAIEIVSSTEERVKAAVDVFKEKLVRRDISMKAFDAGDPQPSGKTYKVNGTIKEGITSEQAKKITKIIRDEGPKGVKAQIQGDEIRVSSKKRDDLQTVISLLKQADLEVALQFVNYR.

The protein belongs to the YajQ family.

Its function is as follows. Nucleotide-binding protein. The chain is Nucleotide-binding protein Mmcs_0777 from Mycobacterium sp. (strain MCS).